Reading from the N-terminus, the 321-residue chain is Oxidoreductase P35 (321 aa).

The protein belongs to the Gfo/Idh/MocA family.

It localises to the cell surface. Its function is as follows. Oxidoreductase that may be involved in ulvan degradation. Ulvan is the main polysaccharide component of the Ulvales (green seaweed) cell wall. It is composed of disaccharide building blocks comprising 3-sulfated rhamnose (Rha3S) linked to D-glucuronic acid (GlcA), L-iduronic acid (IduA), or D-xylose (Xyl). The polypeptide is Oxidoreductase P35 (Formosa agariphila (strain DSM 15362 / KCTC 12365 / LMG 23005 / KMM 3901 / M-2Alg 35-1)).